The primary structure comprises 304 residues: Acetaldehyde dehydrogenase 4 (304 aa).

The active-site Acyl-thioester intermediate is Cys131. NAD(+)-binding positions include 162–170 and Asn273; that span reads SAGPGTRKN.

This sequence belongs to the acetaldehyde dehydrogenase family.

It catalyses the reaction acetaldehyde + NAD(+) + CoA = acetyl-CoA + NADH + H(+). This is Acetaldehyde dehydrogenase 4 from Dechloromonas aromatica (strain RCB).